Here is a 226-residue protein sequence, read N- to C-terminus: ATP synthase F(0) complex subunit a (226 aa).

The next 6 helical transmembrane spans lie at 6 to 26 (FASFAAPTILGLPAAVLIILF), 68 to 88 (WSLMLVSLIIFITTTNLLGLL), 97 to 117 (QLSMNLAMAIPLWAGAVVMGF), 138 to 158 (IPMLVIIETISLLIQPMALAV), 164 to 184 (ITAGHLLMHLIGSATLALSTI), and 189 to 209 (ALIIFTILILLTILEIAVALI).

Belongs to the ATPase A chain family. In terms of assembly, component of the ATP synthase complex composed at least of ATP5F1A/subunit alpha, ATP5F1B/subunit beta, ATP5MC1/subunit c (homooctomer), MT-ATP6/subunit a, MT-ATP8/subunit 8, ATP5ME/subunit e, ATP5MF/subunit f, ATP5MG/subunit g, ATP5MK/subunit k, ATP5MJ/subunit j, ATP5F1C/subunit gamma, ATP5F1D/subunit delta, ATP5F1E/subunit epsilon, ATP5PF/subunit F6, ATP5PB/subunit b, ATP5PD/subunit d, ATP5PO/subunit OSCP. ATP synthase complex consists of a soluble F(1) head domain (subunits alpha(3) and beta(3)) - the catalytic core - and a membrane F(0) domain - the membrane proton channel (subunits c, a, 8, e, f, g, k and j). These two domains are linked by a central stalk (subunits gamma, delta, and epsilon) rotating inside the F1 region and a stationary peripheral stalk (subunits F6, b, d, and OSCP). Interacts with DNAJC30; interaction is direct.

The protein resides in the mitochondrion inner membrane. It catalyses the reaction H(+)(in) = H(+)(out). In terms of biological role, subunit a, of the mitochondrial membrane ATP synthase complex (F(1)F(0) ATP synthase or Complex V) that produces ATP from ADP in the presence of a proton gradient across the membrane which is generated by electron transport complexes of the respiratory chain. ATP synthase complex consist of a soluble F(1) head domain - the catalytic core - and a membrane F(1) domain - the membrane proton channel. These two domains are linked by a central stalk rotating inside the F(1) region and a stationary peripheral stalk. During catalysis, ATP synthesis in the catalytic domain of F(1) is coupled via a rotary mechanism of the central stalk subunits to proton translocation. With the subunit c (ATP5MC1), forms the proton-conducting channel in the F(0) domain, that contains two crucial half-channels (inlet and outlet) that facilitate proton movement from the mitochondrial intermembrane space (IMS) into the matrix. Protons are taken up via the inlet half-channel and released through the outlet half-channel, following a Grotthuss mechanism. In Pan troglodytes (Chimpanzee), this protein is ATP synthase F(0) complex subunit a.